The chain runs to 340 residues: Nuclear transcription factor Y subunit A-3 (340 aa).

Residues 43–116 form a disordered region; sequence SLSLKVDSRP…KGFASNPKQG (74 aa). The span at 60–77 shows a compositional bias: low complexity; that stretch reads QISFQDQDSSSTQSTGQS. The span at 78-103 shows a compositional bias: polar residues; it reads YTEVASSGDDNPSRQISFSAKSGSEI. The Subunit association domain (SAD) motif lies at 182-205; that stretch reads FVNAKQYHAIMRRRQQRAKLEAQN. Positions 212 to 237 form a DNA-binding region, NFYA/HAP2-type; sequence KPYLHESRHVHALKRPRGSGGRFLNT.

Belongs to the NFYA/HAP2 subunit family. In terms of assembly, heterotrimeric transcription factor composed of three components, NF-YA, NF-YB and NF-YC. NF-YB and NF-YC must interact and dimerize for NF-YA association and DNA binding. In terms of tissue distribution, ubiquitous.

The protein localises to the nucleus. Functionally, stimulates the transcription of various genes by recognizing and binding to a CCAAT motif in promoters. In Arabidopsis thaliana (Mouse-ear cress), this protein is Nuclear transcription factor Y subunit A-3 (NFYA3).